A 603-amino-acid chain; its full sequence is Matrix metalloproteinase-17 (603 aa).

The N-terminal stretch at 1 to 35 (MRRRAARGPGPPPPGPGLSRLPLPLLLLLALGTRG) is a signal peptide. A propeptide spanning residues 36–125 (GCAAPAPAPR…PVLTQARRRR (90 aa)) is cleaved from the precursor. A Cysteine switch motif is present at residues 108–115 (PRCSLPDL). Cys110 is a Zn(2+) binding site. N-linked (GlcNAc...) asparagine glycosylation is present at Asn137. His248 contributes to the Zn(2+) binding site. Glu249 is a catalytic residue. 2 residues coordinate Zn(2+): His252 and His258. The disordered stretch occupies residues 301–329 (SPTAQPEEPPLLPEPPDNRSSAPPRKDVP). Residue Asn318 is glycosylated (N-linked (GlcNAc...) asparagine). A disulfide bond links Cys332 and Cys523. 4 Hemopexin repeats span residues 333–378 (STHF…WRGL), 382–427 (LDSV…FSLP), 428–475 (PGGI…WRGV), and 476–523 (PSTL…WLVC). The disordered stretch occupies residues 537–571 (DAAEGPRAPPGQHDQSRSEDGYEVCSCTSGASSPP). The GPI-anchor amidated serine moiety is linked to residue Ser565. Positions 566–603 (GASSPPGAPGPLVAATMLLLLPPLSPGALWTAAQALTL) are cleaved as a propeptide — removed in mature form.

This sequence belongs to the peptidase M10A family. Requires Zn(2+) as cofactor. The cofactor is Ca(2+). Post-translationally, the precursor is cleaved by a furin endopeptidase. In terms of tissue distribution, expressed in brain, leukocytes, colon, ovary testis and breast cancer. Expressed also in many transformed and non-transformed cell types.

The protein localises to the cell membrane. It localises to the secreted. Its subcellular location is the extracellular space. It is found in the extracellular matrix. In terms of biological role, endopeptidase that degrades various components of the extracellular matrix, such as fibrin. May be involved in the activation of membrane-bound precursors of growth factors or inflammatory mediators, such as tumor necrosis factor-alpha. May also be involved in tumoral process. Cleaves pro-TNF-alpha at the '74-Ala-|-Gln-75' site. Not obvious if able to proteolytically activate progelatinase A. Does not hydrolyze collagen types I, II, III, IV and V, gelatin, fibronectin, laminin, decorin nor alpha1-antitrypsin. The sequence is that of Matrix metalloproteinase-17 (MMP17) from Homo sapiens (Human).